The chain runs to 732 residues: Catalase-peroxidase (732 aa).

The segment at residues 96 to 219 (WHSAGTYRIG…LGAVQMGLIY (124 aa)) is a cross-link (tryptophyl-tyrosyl-methioninium (Trp-Tyr) (with M-245)). The Proton acceptor role is filled by His97. A cross-link (tryptophyl-tyrosyl-methioninium (Tyr-Met) (with W-96)) is located at residues 219–245 (YVNPEGPNGHPDPVASGRDIRETFGRM). His260 serves as a coordination point for heme b.

The protein belongs to the peroxidase family. Peroxidase/catalase subfamily. Homodimer or homotetramer. Heme b serves as cofactor. In terms of processing, formation of the three residue Trp-Tyr-Met cross-link is important for the catalase, but not the peroxidase activity of the enzyme.

It catalyses the reaction H2O2 + AH2 = A + 2 H2O. The catalysed reaction is 2 H2O2 = O2 + 2 H2O. In terms of biological role, bifunctional enzyme with both catalase and broad-spectrum peroxidase activity. The chain is Catalase-peroxidase from Acaryochloris marina (strain MBIC 11017).